The sequence spans 82 residues: uncharacterized protein (82 aa).

2 consecutive transmembrane segments (helical) span residues 8-28 and 50-70; these read LLSA…LPAP and LYTV…YLVL.

The protein resides in the cell membrane. This is an uncharacterized protein from Klebsiella pneumoniae.